Reading from the N-terminus, the 315-residue chain is ATP synthase gamma chain (315 aa).

F-type ATPases have 2 components, CF(1) - the catalytic core - and CF(0) - the membrane proton channel. CF(1) has five subunits: alpha(3), beta(3), gamma(1), delta(1), epsilon(1). CF(0) has four main subunits: a(1), b(1), b'(1) and c(9-12).

It is found in the cellular thylakoid membrane. In terms of biological role, produces ATP from ADP in the presence of a proton gradient across the membrane. The gamma chain is believed to be important in regulating ATPase activity and the flow of protons through the CF(0) complex. Functionally, the complex from the organism is particularly stable to disruption and remains functional after 6 hrs at 55 degrees Celsius. This is ATP synthase gamma chain from Thermosynechococcus vestitus (strain NIES-2133 / IAM M-273 / BP-1).